The sequence spans 533 residues: Retinoid isomerohydrolase (533 aa).

Ser2 is modified (N-acetylserine). Residues Thr101 and Thr105 each carry the phosphothreonine modification. Cys112 carries S-palmitoyl cysteine; in membrane form lipidation. Lys113 bears the N6-acetyllysine mark. The residue at position 117 (Ser117) is a Phosphoserine. Residue His180 participates in Fe cation binding. A lipid anchor (S-palmitoyl cysteine; in membrane form) is attached at Cys231. Residues His241 and His313 each coordinate Fe cation. Residues Cys329 and Cys330 are each lipidated (S-palmitoyl cysteine; in membrane form). His527 provides a ligand contact to Fe cation.

The protein belongs to the carotenoid oxygenase family. As to quaternary structure, interacts with MYO7A; this mediates light-dependent intracellular transport of RPE65. Fe(2+) serves as cofactor. Palmitoylation by LRAT regulates ligand binding specificity; the palmitoylated form (membrane form) specifically binds all-trans-retinyl-palmitate, while the soluble unpalmitoylated form binds all-trans-retinol (vitamin A). In terms of tissue distribution, retinal pigment epithelium specific.

It localises to the cytoplasm. It is found in the cell membrane. Its subcellular location is the microsome membrane. It carries out the reaction an all-trans-retinyl ester + H2O = 11-cis-retinol + a fatty acid + H(+). It catalyses the reaction lutein = (3R,3'S)-zeaxanthin. The catalysed reaction is all-trans-retinyl hexadecanoate + H2O = 11-cis-retinol + hexadecanoate + H(+). Critical isomerohydrolase in the retinoid cycle involved in regeneration of 11-cis-retinal, the chromophore of rod and cone opsins. Catalyzes the cleavage and isomerization of all-trans-retinyl fatty acid esters to 11-cis-retinol which is further oxidized by 11-cis retinol dehydrogenase to 11-cis-retinal for use as visual chromophore. Essential for the production of 11-cis retinal for both rod and cone photoreceptors. Also capable of catalyzing the isomerization of lutein to meso-zeaxanthin an eye-specific carotenoid. The soluble form binds vitamin A (all-trans-retinol), making it available for LRAT processing to all-trans-retinyl ester. The membrane form, palmitoylated by LRAT, binds all-trans-retinyl esters, making them available for IMH (isomerohydrolase) processing to all-cis-retinol. The soluble form is regenerated by transferring its palmitoyl groups onto 11-cis-retinol, a reaction catalyzed by LRAT. The protein is Retinoid isomerohydrolase (Rpe65) of Mus musculus (Mouse).